The chain runs to 739 residues: NAD(P)H-quinone oxidoreductase subunit 5, chloroplastic (739 aa).

16 helical membrane passes run 9–29, 39–59, 89–109, 125–145, 147–167, 185–205, 224–244, 258–278, 280–300, 327–347, 354–374, 396–416, 425–445, 544–564, 603–623, and 719–739; these read WIIPFLPFPVTISIGLGLLLV, IWAFFSVLLLSIAMVFSADLA, IDPLTSIMLILITTVGIMVLI, FAYMSFFNTSMLGLVTSSNLI, IYIFWELVGMCSYLLIGFWFT, GDFGLLLGILGLYWITGSFEF, LFAALCASLLFVGAVAKSAQF, TPISALIHAATMVAAGIFLVA, LLPLFTVIPYIMNFISLIGII, LGYIMLAPGIGSYRAALFHLI, ALLFLGSGSIIHSMEPIVGYS, TTFFLGTLSLCGMPPLACFWS, WLYSPIFAIIAWSTAGLTAFY, LFPMLVLVLFTLFIGFIGIPF, IYSVTISFLGIFLAYIFYGSV, and YIFLYAFSVSICLIIYYFFSF.

Belongs to the complex I subunit 5 family. As to quaternary structure, NDH is composed of at least 16 different subunits, 5 of which are encoded in the nucleus.

Its subcellular location is the plastid. It localises to the chloroplast thylakoid membrane. It carries out the reaction a plastoquinone + NADH + (n+1) H(+)(in) = a plastoquinol + NAD(+) + n H(+)(out). The enzyme catalyses a plastoquinone + NADPH + (n+1) H(+)(in) = a plastoquinol + NADP(+) + n H(+)(out). Its function is as follows. NDH shuttles electrons from NAD(P)H:plastoquinone, via FMN and iron-sulfur (Fe-S) centers, to quinones in the photosynthetic chain and possibly in a chloroplast respiratory chain. The immediate electron acceptor for the enzyme in this species is believed to be plastoquinone. Couples the redox reaction to proton translocation, and thus conserves the redox energy in a proton gradient. This chain is NAD(P)H-quinone oxidoreductase subunit 5, chloroplastic (ndhF), found in Acorus calamus var. americanus (American sweet flag).